We begin with the raw amino-acid sequence, 762 residues long: Protein PHTF1 (762 aa).

The PHTF domain occupies 6-150 (RDAISWYQKK…VHCQIVSTQI (145 aa)). A run of 3 helical transmembrane segments spans residues 77–97 (GLVR…VTSL), 99–119 (IFVW…LYLM), and 121–141 (PIVN…MGTV). The tract at residues 152–184 (RPSGNNGNRRRRKLRKTVNGDGSRENGNNSSDK) is disordered. N179 and N180 each carry an N-linked (GlcNAc...) asparagine glycan. S272, S276, S277, S334, and S336 each carry phosphoserine. 2 disordered regions span residues 344–380 (SAAF…ETED) and 393–415 (RSSV…TKRD). Residues 348 to 361 (SQGSRSGVSGGSRS) show a composition bias toward low complexity. The N-linked (GlcNAc...) asparagine glycan is linked to N363. A compositionally biased stretch (basic and acidic residues) spans 365–376 (SRRDSESTRHDS). N-linked (GlcNAc...) asparagine glycosylation occurs at N431. Transmembrane regions (helical) follow at residues 473 to 493 (GVGY…FPFL), 512 to 532 (EILT…LSII), 611 to 631 (VVVS…CAQV), and 645 to 665 (WEFL…ASLG). N-linked (GlcNAc...) asparagine glycans are attached at residues N674 and N733. A helical transmembrane segment spans residues 737-757 (VVILSAVSGVISDLLGFNIRL).

In terms of assembly, interacts with FEM1B. In terms of tissue distribution, widely expressed with highest levels in testis.

Its subcellular location is the endoplasmic reticulum membrane. The protein resides in the golgi apparatus. It is found in the cis-Golgi network membrane. This is Protein PHTF1 from Homo sapiens (Human).